The primary structure comprises 510 residues: Solute carrier family 2, facilitated glucose transporter member 2 (510 aa).

Residues 1–10 are Cytoplasmic-facing; that stretch reads MTEDKVTGTL. Residues 11-31 form a helical membrane-spanning segment; that stretch reads VLAVFTAVLSSFQFGYDIGVI. Residues 32–96 lie on the Extracellular side of the membrane; the sequence is NAPQQVIITH…SASLITMFWS (65 aa). Asn62 is a glycosylation site (N-linked (GlcNAc...) asparagine). A helical membrane pass occupies residues 97–117; that stretch reads LSVSSFAVGGMIASFFGGLLG. The Cytoplasmic segment spans residues 118–122; it reads DKLGR. The chain crosses the membrane as a helical span at residues 123–143; sequence IKALLVANILSLVGALLMGFS. Residues 144-157 are Extracellular-facing; sequence KLGPSHILIISGRG. A helical membrane pass occupies residues 158-178; the sequence is ISGLYCGLISGLIPMYIGEIA. The Cytoplasmic segment spans residues 179–191; it reads PTTLRGAIGALHQ. Gln191 contributes to the D-glucose binding site. A helical membrane pass occupies residues 192 to 212; the sequence is LAIVTGILISQIVGLDFILGN. Residues 213 to 215 lie on the Extracellular side of the membrane; the sequence is HEL. Residues 216 to 236 form a helical membrane-spanning segment; it reads WHILLGLSAVPAILQCLLLFF. The Cytoplasmic portion of the chain corresponds to 237–301; sequence CPESPRYLYI…LFTNASYRQP (65 aa). A helical membrane pass occupies residues 302 to 322; that stretch reads ILVALMLHAAQQFSGINGIFY. D-glucose is bound by residues 312 to 313 and Asn318; that span reads QQ. The Extracellular portion of the chain corresponds to 323-336; sequence YSTSIFQTAGISQP. Residues 337 to 357 traverse the membrane as a helical segment; it reads VYATIGVGAVNTVFTAVSVFL. D-glucose is bound at residue Asn347. Over 358–365 the chain is Cytoplasmic; the sequence is VEKAGRRS. Residues 366–386 form a helical membrane-spanning segment; it reads LFLIGMSGMFVCAIFMSVGLV. Residues 387–400 lie on the Extracellular side of the membrane; it reads LLSKFPWMNYVSMT. A helical transmembrane segment spans residues 401-421; it reads AIFLFVSFFEIGPGPIPWFMV. 2 residues coordinate D-glucose: Glu410 and Trp418. The Cytoplasmic segment spans residues 422-431; sequence AEFFSQGPRP. The chain crosses the membrane as a helical span at residues 432–452; the sequence is AALAIAAFSNWTGNFIIALCF. Over 453 to 454 the chain is Extracellular; that stretch reads QY. Residues 455–475 form a helical membrane-spanning segment; that stretch reads IADFCGPYVFFLLLVWSWPLF. Over 476–510 the chain is Cytoplasmic; the sequence is CSHFLKFQKPKENPLRKSQQSSERRGVQLKRQKLL. The tract at residues 490 to 510 is disordered; that stretch reads LRKSQQSSERRGVQLKRQKLL.

The protein belongs to the major facilitator superfamily. Sugar transporter (TC 2.A.1.1) family. Glucose transporter subfamily. Post-translationally, N-glycosylated; required for stability and retention at the cell surface of pancreatic beta cells.

It localises to the cell membrane. It carries out the reaction D-glucose(out) = D-glucose(in). The catalysed reaction is D-fructose(out) = D-fructose(in). The enzyme catalyses L-dehydroascorbate(out) = L-dehydroascorbate(in). It catalyses the reaction D-galactose(in) = D-galactose(out). Its activity is regulated as follows. D-glucose and maltose competitively inhibit fructose transport. D-glucose, D-fructose and maltose inhibit deoxyglucose transport. Functionally, facilitative hexose transporter that mediates the transport of glucose, fructose and galactose. Likely mediates the bidirectional transfer of glucose across the plasma membrane of hepatocytes and is responsible for uptake of glucose by the beta cells; may comprise part of the glucose-sensing mechanism of the beta cell. May also participate with the Na(+)/glucose cotransporter in the transcellular transport of glucose in the small intestine and kidney. Also able to mediate the transport of dehydroascorbate. The polypeptide is Solute carrier family 2, facilitated glucose transporter member 2 (Bos taurus (Bovine)).